The primary structure comprises 437 residues: tRNA modification GTPase MnmE (437 aa).

(6S)-5-formyl-5,6,7,8-tetrahydrofolate is bound by residues arginine 21, glutamate 80, and arginine 120. The TrmE-type G domain maps to 218-361; it reads GFVVVLAGPP…LLDRVAAAAG (144 aa). Position 228 (asparagine 228) interacts with K(+). GTP is bound by residues 228-233, 247-253, and 272-275; these read NAGKST, SPIPGTT, and DTAG. Mg(2+) is bound at residue serine 232. K(+) is bound by residues serine 247, isoleucine 249, and threonine 252. Threonine 253 lines the Mg(2+) pocket. Lysine 437 contributes to the (6S)-5-formyl-5,6,7,8-tetrahydrofolate binding site.

The protein belongs to the TRAFAC class TrmE-Era-EngA-EngB-Septin-like GTPase superfamily. TrmE GTPase family. Homodimer. Heterotetramer of two MnmE and two MnmG subunits. K(+) serves as cofactor.

The protein resides in the cytoplasm. Its function is as follows. Exhibits a very high intrinsic GTPase hydrolysis rate. Involved in the addition of a carboxymethylaminomethyl (cmnm) group at the wobble position (U34) of certain tRNAs, forming tRNA-cmnm(5)s(2)U34. This Methylobacterium sp. (strain 4-46) protein is tRNA modification GTPase MnmE.